Reading from the N-terminus, the 714-residue chain is Fatty acid oxidation complex subunit alpha (714 aa).

Residues 1 to 190 are enoyl-CoA hydratase; that stretch reads MEMTSAFTLN…KLGLVDDVVP (190 aa). The segment at 306-714 is 3-hydroxyacyl-CoA dehydrogenase; that stretch reads APLNSVGILG…FWKTTATDLQ (409 aa).

It in the N-terminal section; belongs to the enoyl-CoA hydratase/isomerase family. This sequence in the central section; belongs to the 3-hydroxyacyl-CoA dehydrogenase family. As to quaternary structure, heterotetramer of two alpha chains (FadJ) and two beta chains (FadI).

It is found in the cytoplasm. The enzyme catalyses a (3S)-3-hydroxyacyl-CoA = a (2E)-enoyl-CoA + H2O. The catalysed reaction is a 4-saturated-(3S)-3-hydroxyacyl-CoA = a (3E)-enoyl-CoA + H2O. It catalyses the reaction a (3S)-3-hydroxyacyl-CoA + NAD(+) = a 3-oxoacyl-CoA + NADH + H(+). It carries out the reaction (3S)-3-hydroxybutanoyl-CoA = (3R)-3-hydroxybutanoyl-CoA. Its pathway is lipid metabolism; fatty acid beta-oxidation. Its function is as follows. Catalyzes the formation of a hydroxyacyl-CoA by addition of water on enoyl-CoA. Also exhibits 3-hydroxyacyl-CoA epimerase and 3-hydroxyacyl-CoA dehydrogenase activities. Strongly involved in the anaerobic degradation of long and medium-chain fatty acids in the presence of nitrate and weakly involved in the aerobic degradation of long-chain fatty acids. The protein is Fatty acid oxidation complex subunit alpha (fadJ) of Escherichia coli (strain K12).